The chain runs to 131 residues: Methylglyoxal synthase (131 aa).

The 131-residue stretch at 1 to 131 (MKIALIAHDK…GDLDYRKLRK (131 aa)) folds into the MGS-like domain. Substrate is bound by residues H8, K12, 34–37 (TGTT), and 54–55 (SG). The Proton donor/acceptor role is filled by D60. H87 serves as a coordination point for substrate.

Belongs to the methylglyoxal synthase family.

The enzyme catalyses dihydroxyacetone phosphate = methylglyoxal + phosphate. Functionally, catalyzes the formation of methylglyoxal from dihydroxyacetone phosphate. The sequence is that of Methylglyoxal synthase from Bacillus mycoides (strain KBAB4) (Bacillus weihenstephanensis).